We begin with the raw amino-acid sequence, 385 residues long: Ethanolamine kinase 2 (385 aa).

It belongs to the choline/ethanolamine kinase family.

It carries out the reaction ethanolamine + ATP = phosphoethanolamine + ADP + H(+). Its pathway is phospholipid metabolism; phosphatidylethanolamine biosynthesis; phosphatidylethanolamine from ethanolamine: step 1/3. Its function is as follows. Highly specific for ethanolamine phosphorylation. Does not have choline kinase activity. The chain is Ethanolamine kinase 2 (Etnk2) from Rattus norvegicus (Rat).